The following is a 251-amino-acid chain: Large ribosomal subunit protein uL4 (251 aa).

This sequence belongs to the universal ribosomal protein uL4 family. In terms of assembly, part of the 50S ribosomal subunit.

In terms of biological role, one of the primary rRNA binding proteins, this protein initially binds near the 5'-end of the 23S rRNA. It is important during the early stages of 50S assembly. It makes multiple contacts with different domains of the 23S rRNA in the assembled 50S subunit and ribosome. Its function is as follows. Forms part of the polypeptide exit tunnel. This Methanothrix thermoacetophila (strain DSM 6194 / JCM 14653 / NBRC 101360 / PT) (Methanosaeta thermophila) protein is Large ribosomal subunit protein uL4.